The sequence spans 243 residues: Probable transcriptional regulatory protein BPP2422 (243 aa).

The disordered stretch occupies residues methionine 1–arginine 21.

It belongs to the TACO1 family.

Its subcellular location is the cytoplasm. This chain is Probable transcriptional regulatory protein BPP2422, found in Bordetella parapertussis (strain 12822 / ATCC BAA-587 / NCTC 13253).